Consider the following 599-residue polypeptide: Kinesin light chain 2 (599 aa).

Residues 78 to 143 are a coiled coil; it reads ILALSSHLGA…KQHLLFMSQI (66 aa). Residues 154–163 show a composition bias toward basic and acidic residues; sequence EKGDVPKDSL. The tract at residues 154–188 is disordered; the sequence is EKGDVPKDSLDDLFPNEDEQSPAPSPGGGDVAAQH. A phosphoserine mark is found at serine 174 and serine 178. TPR repeat units follow at residues 197–230, 239–272, 281–314, 323–356, and 365–398; these read LRTLHNLVIQYASQGRYEVAVPLCKQALEDLEKT, ATMLNILALVYRDQNKYKDAAHLLNDALAIREKT, AATLNNLAVLYGKRGKYKEAEPLCKRALEIREKV, AKQLSNLALLCQNQGKAEEVEYYYRRALEIYATR, and AKTKNNLASCYLKQGKYQDAETLYKEILTRAHEK. Serine 443 is subject to Phosphoserine. Residues 447–480 form a TPR 6 repeat; sequence NTTLRTLGALYRPEGKLEAAHTLEDCASRSRKQG. The tract at residues 492–541 is disordered; sequence LLKDGSGRGHRRGSRDVAGPQSESDLEESGPAAEWSGDGSGSLRRSGSFG. A phosphoserine mark is found at serine 505 and serine 515. Residues 532–541 are compositionally biased toward low complexity; it reads GSLRRSGSFG. 3 positions are modified to phosphoserine: serine 574, serine 575, and serine 582.

It belongs to the kinesin light chain family. As to quaternary structure, oligomeric complex composed of two heavy chains and two light chains. Interacts (via TPR repeats) with PLEKHM2.

Its subcellular location is the cytoplasm. It localises to the cytoskeleton. It is found in the lysosome membrane. In terms of biological role, kinesin is a microtubule-associated force-producing protein that plays a role in organelle transport. The light chain functions in coupling of cargo to the heavy chain or in the modulation of its ATPase activity. Through binding with PLEKHM2 and ARL8B, recruits kinesin-1 to lysosomes and hence direct lysosomes movement toward microtubule plus ends. This Mus musculus (Mouse) protein is Kinesin light chain 2.